Reading from the N-terminus, the 585-residue chain is Arginine--tRNA ligase (585 aa).

The short motif at 131-141 (ANPTGPMHVGH) is the 'HIGH' region element.

Belongs to the class-I aminoacyl-tRNA synthetase family. In terms of assembly, monomer.

The protein resides in the cytoplasm. It carries out the reaction tRNA(Arg) + L-arginine + ATP = L-arginyl-tRNA(Arg) + AMP + diphosphate. The protein is Arginine--tRNA ligase of Rhizobium etli (strain ATCC 51251 / DSM 11541 / JCM 21823 / NBRC 15573 / CFN 42).